A 332-amino-acid polypeptide reads, in one-letter code: Ribosomal RNA small subunit methyltransferase C (332 aa).

Belongs to the methyltransferase superfamily. RsmC family. In terms of assembly, monomer.

It is found in the cytoplasm. The enzyme catalyses guanosine(1207) in 16S rRNA + S-adenosyl-L-methionine = N(2)-methylguanosine(1207) in 16S rRNA + S-adenosyl-L-homocysteine + H(+). In terms of biological role, specifically methylates the guanine in position 1207 of 16S rRNA in the 30S particle. This chain is Ribosomal RNA small subunit methyltransferase C, found in Pseudomonas entomophila (strain L48).